Consider the following 390-residue polypeptide: MLSVRAPLATIADQQQLHLSPLKRLSLADKENTPPTLSSARVLASKAARRIFQDSAELESKAPTKPSIEEEPLLRENPRRFVVFPIEYHDIWQMYKKAEASFWTAEEVDLSKDIQHWEALKPDERHFISHVLAFFAASDGIVNENLVERFSQEVQVTEARCFYGFQIAMENIHSEMYSLLIDTYIKDSKEREYLFNAIETMPCVKKKADWALRWIGDKEATYGERVVAFAAVEGIFFSGSFASIFWLKKRGLMPGLTFSNELISRDEGLHCDFACLMFKHLVHKPSEQRVKEIITNSVRIEQEFLTEALPVKLIGMNCTLMKQYIEFVADRLMLELGFNKIFKVENPFDFMENISLEGKTNFFEKRVGEYQRMGVMSNSTENSFTLDADF.

A Phosphoserine modification is found at Ser-20. Residue Thr-33 is modified to Phosphothreonine. The Cy motif lies at 49–51 (RRI). The Fe cation site is built by Asp-139, Glu-170, and His-173. Residue Tyr-177 is part of the active site. 3 residues coordinate Fe cation: Glu-233, Glu-267, and His-270.

The protein belongs to the ribonucleoside diphosphate reductase small chain family. Heterodimer of a large and a small subunit. Interacts (via Cy motif and when phosphorylated at Thr-33) with CCNF; the interaction occurs exclusively in G2 and early M. It depends on Fe cation as a cofactor. Phosphorylation on Ser-20 relieves the inhibitory effect on Wnt signaling. Phosphorylated on Thr-33 by CDK1 and CDK2; predominantly in G2 and M phase. In terms of processing, ubiquitinated by the SCF(CCNF) E3 ubiquitin-protein ligase complex; leading to its degradation by the proteasome.

It localises to the cytoplasm. The protein localises to the nucleus. The enzyme catalyses a 2'-deoxyribonucleoside 5'-diphosphate + [thioredoxin]-disulfide + H2O = a ribonucleoside 5'-diphosphate + [thioredoxin]-dithiol. Its function is as follows. Provides the precursors necessary for DNA synthesis. Catalyzes the biosynthesis of deoxyribonucleotides from the corresponding ribonucleotides. Inhibits Wnt signaling. This is Ribonucleoside-diphosphate reductase subunit M2 (Rrm2) from Rattus norvegicus (Rat).